We begin with the raw amino-acid sequence, 416 residues long: Chorismate synthase (416 aa).

Arg-40 and Arg-46 together coordinate NADP(+). FMN contacts are provided by residues 135-137, 256-257, Gly-300, 315-319, and Arg-341; these read RAS, QA, and KPIAT.

This sequence belongs to the chorismate synthase family. As to quaternary structure, homotetramer. The cofactor is FMNH2.

The catalysed reaction is 5-O-(1-carboxyvinyl)-3-phosphoshikimate = chorismate + phosphate. It functions in the pathway metabolic intermediate biosynthesis; chorismate biosynthesis; chorismate from D-erythrose 4-phosphate and phosphoenolpyruvate: step 7/7. Catalyzes the anti-1,4-elimination of the C-3 phosphate and the C-6 proR hydrogen from 5-enolpyruvylshikimate-3-phosphate (EPSP) to yield chorismate, which is the branch point compound that serves as the starting substrate for the three terminal pathways of aromatic amino acid biosynthesis. This reaction introduces a second double bond into the aromatic ring system. The chain is Chorismate synthase from Kocuria rhizophila (strain ATCC 9341 / DSM 348 / NBRC 103217 / DC2201).